Here is a 150-residue protein sequence, read N- to C-terminus: Submaxillary gland androgen-regulated protein 2, isoform alpha (150 aa).

An N-terminal signal peptide occupies residues 1 to 22 (MKALYMVFVLWVLIGCFLSGEC).

It is found in the secreted. Functionally, may play a role in protection or detoxification. This is Submaxillary gland androgen-regulated protein 2, isoform alpha (Smr2) from Mus musculus (Mouse).